The following is a 343-amino-acid chain: Thiamine-phosphate synthase (343 aa).

Residues 1–123 (MQQASPTAIA…GACCKQLRYR (123 aa)) form a unknown region. Residues 124–343 (VYALESGLLG…LLTQLSRINP (220 aa)) are thiamine-phosphate synthase. 4-amino-2-methyl-5-(diphosphooxymethyl)pyrimidine contacts are provided by residues 171 to 175 (QYRDK) and Asn-203. The Mg(2+) site is built by Asp-204 and Asp-223. Ser-242 is a binding site for 4-amino-2-methyl-5-(diphosphooxymethyl)pyrimidine. Residue 268–270 (TPT) coordinates 2-[(2R,5Z)-2-carboxy-4-methylthiazol-5(2H)-ylidene]ethyl phosphate. Position 271 (Lys-271) interacts with 4-amino-2-methyl-5-(diphosphooxymethyl)pyrimidine. Gly-298 is a 2-[(2R,5Z)-2-carboxy-4-methylthiazol-5(2H)-ylidene]ethyl phosphate binding site.

This sequence belongs to the thiamine-phosphate synthase family. Requires Mg(2+) as cofactor.

It carries out the reaction 2-[(2R,5Z)-2-carboxy-4-methylthiazol-5(2H)-ylidene]ethyl phosphate + 4-amino-2-methyl-5-(diphosphooxymethyl)pyrimidine + 2 H(+) = thiamine phosphate + CO2 + diphosphate. The enzyme catalyses 2-(2-carboxy-4-methylthiazol-5-yl)ethyl phosphate + 4-amino-2-methyl-5-(diphosphooxymethyl)pyrimidine + 2 H(+) = thiamine phosphate + CO2 + diphosphate. It catalyses the reaction 4-methyl-5-(2-phosphooxyethyl)-thiazole + 4-amino-2-methyl-5-(diphosphooxymethyl)pyrimidine + H(+) = thiamine phosphate + diphosphate. It participates in cofactor biosynthesis; thiamine diphosphate biosynthesis; thiamine phosphate from 4-amino-2-methyl-5-diphosphomethylpyrimidine and 4-methyl-5-(2-phosphoethyl)-thiazole: step 1/1. Functionally, condenses 4-methyl-5-(beta-hydroxyethyl)thiazole monophosphate (THZ-P) and 2-methyl-4-amino-5-hydroxymethyl pyrimidine pyrophosphate (HMP-PP) to form thiamine monophosphate (TMP). This chain is Thiamine-phosphate synthase, found in Synechocystis sp. (strain ATCC 27184 / PCC 6803 / Kazusa).